The chain runs to 1122 residues: TSET complex member tstF (1122 aa).

Low complexity predominate over residues 88–126 (SSSASGINGTNNNNSGSNSSNNNNNNNGSLSNSPNNNNN). Disordered stretches follow at residues 88-131 (SSSA…AFIG) and 178-215 (QTLH…STNS). Residues 178-190 (QTLHNRSPNNTIK) are compositionally biased toward polar residues. The span at 191-215 (LSPNSSNNDSLNNNNNNINNNSTNS) shows a compositional bias: low complexity. WD repeat units follow at residues 298–337 (FENK…IEKQ), 342–381 (PKGT…LATQ), and 383–422 (SKVH…EVSK). The tract at residues 731 to 775 (NGSVGGSSSNNSANSNNSNNNNNNNNNNSNNSNNNNNSSQPILEP) is disordered.

As to quaternary structure, component of the TSET complex, a heterohexamer composed of tstA, tstB, tstC, tstD, tstE and tstF, which may act in plasma membrane turnover. tstA, tstB, tstC and tstD are likely to be the core complex members with tstE and tstF acting as associated scaffold proteins.

This chain is TSET complex member tstF, found in Dictyostelium discoideum (Social amoeba).